The following is a 372-amino-acid chain: Probable butyrate kinase (372 aa).

The protein belongs to the acetokinase family.

Its subcellular location is the cytoplasm. The catalysed reaction is butanoate + ATP = butanoyl phosphate + ADP. This chain is Probable butyrate kinase, found in Oleidesulfovibrio alaskensis (strain ATCC BAA-1058 / DSM 17464 / G20) (Desulfovibrio alaskensis).